A 339-amino-acid chain; its full sequence is Heat-inducible transcription repressor HrcA (339 aa).

This sequence belongs to the HrcA family.

Negative regulator of class I heat shock genes (grpE-dnaK-dnaJ and groELS operons). Prevents heat-shock induction of these operons. This Paraburkholderia xenovorans (strain LB400) protein is Heat-inducible transcription repressor HrcA.